Here is a 280-residue protein sequence, read N- to C-terminus: NLP effector protein Pc553546 (280 aa).

Positions Met1–Gly19 are cleaved as a signal peptide. The short motif at Ala123–Ala129 is the Hepta-peptide GHRHDWE motif element. Asn142 and Asn209 each carry an N-linked (GlcNAc...) asparagine glycan.

This sequence belongs to the Necrosis inducing protein (NPP1) family.

It localises to the secreted. Its function is as follows. Secreted effector that contributes strongly to virulence during infection by P.capsici. The protein is NLP effector protein Pc553546 of Phytophthora capsici.